A 268-amino-acid chain; its full sequence is Putative esterase/lipase 2 (268 aa).

His28 is a catalytic residue. The Charge relay system role is filled by His96.

The protein belongs to the lipase/esterase LIP3/BchO family.

The sequence is that of Putative esterase/lipase 2 from Mycoplasma pneumoniae (strain ATCC 29342 / M129 / Subtype 1) (Mycoplasmoides pneumoniae).